Consider the following 279-residue polypeptide: uncharacterized protein (279 aa).

This is an uncharacterized protein from Acanthamoeba polyphaga mimivirus (APMV).